The primary structure comprises 162 residues: Cytochrome c-type biogenesis protein CcmE (162 aa).

Residues 1-8 lie on the Cytoplasmic side of the membrane; it reads MNPRRKKR. A helical; Signal-anchor for type II membrane protein membrane pass occupies residues 9–29; sequence LALVVGLIGGVAAVASLLLYA. Residues 30-162 lie on the Periplasmic side of the membrane; that stretch reads LNTNLNLFYT…YTETQKGGSR (133 aa). Positions 131 and 135 each coordinate heme.

The protein belongs to the CcmE/CycJ family.

The protein localises to the cell inner membrane. Functionally, heme chaperone required for the biogenesis of c-type cytochromes. Transiently binds heme delivered by CcmC and transfers the heme to apo-cytochromes in a process facilitated by CcmF and CcmH. The protein is Cytochrome c-type biogenesis protein CcmE of Shewanella amazonensis (strain ATCC BAA-1098 / SB2B).